The sequence spans 762 residues: Anhydrosialidase (762 aa).

A signal peptide spans 1–27 (MGRIGKKAMAIALVSAVMVTPLNVCAT). Substrate is bound at residue arginine 293. Residue aspartate 318 is the Proton acceptor of the active site. BNR repeat units follow at residues 328–339 (AKSTDGGNTWSE), 511–522 (RYSDDEGASWSD), and 571–582 (MYSDDHGDNWTY). Residue glutamate 595 is part of the active site. Arginine 611 serves as a coordination point for substrate. One copy of the BNR 4 repeat lies at 620–631 (VTSIDGGETWSD). Arginine 673 contacts substrate. Tyrosine 713 acts as the Nucleophile in catalysis.

Belongs to the glycosyl hydrolase 33 family.

The protein localises to the secreted. It localises to the extracellular space. The enzyme catalyses Elimination of alpha-sialyl groups in N-acetylneuraminic acid glycosides, releasing 2,7-anhydro-alpha-N-acetylneuraminate.. This is Anhydrosialidase from Macrobdella decora (North American leech).